The sequence spans 141 residues: Large ribosomal subunit protein uL11 (141 aa).

The protein belongs to the universal ribosomal protein uL11 family. As to quaternary structure, part of the ribosomal stalk of the 50S ribosomal subunit. Interacts with L10 and the large rRNA to form the base of the stalk. L10 forms an elongated spine to which L12 dimers bind in a sequential fashion forming a multimeric L10(L12)X complex. In terms of processing, one or more lysine residues are methylated.

Functionally, forms part of the ribosomal stalk which helps the ribosome interact with GTP-bound translation factors. The protein is Large ribosomal subunit protein uL11 of Gloeobacter violaceus (strain ATCC 29082 / PCC 7421).